Here is a 354-residue protein sequence, read N- to C-terminus: Pyrimidine monooxygenase RutA (354 aa).

FMN-binding positions include 49-50 (IK), asparagine 115, glutamate 124, 140-141 (RY), and serine 189.

Belongs to the NtaA/SnaA/DszA monooxygenase family. RutA subfamily.

It catalyses the reaction uracil + FMNH2 + NADH + O2 = (Z)-3-ureidoacrylate + FMN + NAD(+) + H2O + H(+). The catalysed reaction is thymine + FMNH2 + NADH + O2 = (Z)-2-methylureidoacrylate + FMN + NAD(+) + H2O + H(+). Functionally, catalyzes the pyrimidine ring opening between N-3 and C-4 by an unusual flavin hydroperoxide-catalyzed mechanism, adding oxygen atoms in the process to yield ureidoacrylate peracid, that immediately reacts with FMN forming ureidoacrylate and FMN-N(5)-oxide. The FMN-N(5)-oxide reacts spontaneously with NADH to produce FMN. Requires the flavin reductase RutF to regenerate FMN in vivo. This chain is Pyrimidine monooxygenase RutA, found in Caulobacter sp. (strain K31).